Consider the following 482-residue polypeptide: Pup--protein ligase (482 aa).

Glutamate 16 contributes to the Mg(2+) binding site. Arginine 60 is an ATP binding site. Tyrosine 62 contacts Mg(2+). Residue aspartate 64 is the Proton acceptor of the active site. Glutamate 70 serves as a coordination point for Mg(2+). Positions 73 and 440 each coordinate ATP.

Belongs to the Pup ligase/Pup deamidase family. Pup-conjugating enzyme subfamily.

The catalysed reaction is ATP + [prokaryotic ubiquitin-like protein]-L-glutamate + [protein]-L-lysine = ADP + phosphate + N(6)-([prokaryotic ubiquitin-like protein]-gamma-L-glutamyl)-[protein]-L-lysine.. Its pathway is protein degradation; proteasomal Pup-dependent pathway. It participates in protein modification; protein pupylation. In terms of biological role, catalyzes the covalent attachment of the prokaryotic ubiquitin-like protein modifier Pup to the proteasomal substrate proteins, thereby targeting them for proteasomal degradation. This tagging system is termed pupylation. The ligation reaction involves the side-chain carboxylate of the C-terminal glutamate of Pup and the side-chain amino group of a substrate lysine. The protein is Pup--protein ligase of Corynebacterium glutamicum (strain R).